A 295-amino-acid polypeptide reads, in one-letter code: uncharacterized protein (295 aa).

Positions Met-1–Ala-19 are cleaved as a signal peptide.

This is an uncharacterized protein from Rickettsia conorii (strain ATCC VR-613 / Malish 7).